The chain runs to 108 residues: Nucleoid-associated protein HCH_02614 (108 aa).

This sequence belongs to the YbaB/EbfC family. Homodimer.

Its subcellular location is the cytoplasm. The protein resides in the nucleoid. Functionally, binds to DNA and alters its conformation. May be involved in regulation of gene expression, nucleoid organization and DNA protection. This is Nucleoid-associated protein HCH_02614 from Hahella chejuensis (strain KCTC 2396).